A 508-amino-acid polypeptide reads, in one-letter code: NADH-quinone oxidoreductase subunit N 2 (508 aa).

14 consecutive transmembrane segments (helical) span residues 14-34, 43-63, 90-110, 119-139, 144-164, 179-199, 223-243, 275-295, 298-318, 327-347, 353-373, 400-420, 433-455, and 473-493; these read SYVAILPHLIVTATLLVVIVL, SLVWVTLGGVVLAMLSIWYTA, FTFFMNGVLLGIAALVILLSA, GAHMEFYEIILAVTLGMMFMV, LLTIYIGLELTSISSYVLAGI, FLTGATASAVLLFGLSLIYGV, GPALTPLLVAGMAFLMVGFGF, GAAMAAILRVFVGGLGVAPFT, WALIWALAAAASMTVGNLVAL, MAYSSIAQAGYILVGVAASGL, ISSVLFYVMAYAVTNLGIFAV, AWALLLFFVSLIGIPPTVGFL, GYLWLAVLMAVNSVISVGYYYRV, and TGISATVLLSLLGVVALTIFA.

Belongs to the complex I subunit 2 family. NDH-1 is composed of 14 different subunits. Subunits NuoA, H, J, K, L, M, N constitute the membrane sector of the complex.

The protein resides in the cell membrane. It carries out the reaction a quinone + NADH + 5 H(+)(in) = a quinol + NAD(+) + 4 H(+)(out). Its function is as follows. NDH-1 shuttles electrons from NADH, via FMN and iron-sulfur (Fe-S) centers, to quinones in the respiratory chain. The immediate electron acceptor for the enzyme in this species is believed to be a menaquinone. Couples the redox reaction to proton translocation (for every two electrons transferred, four hydrogen ions are translocated across the cytoplasmic membrane), and thus conserves the redox energy in a proton gradient. This chain is NADH-quinone oxidoreductase subunit N 2, found in Symbiobacterium thermophilum (strain DSM 24528 / JCM 14929 / IAM 14863 / T).